The primary structure comprises 355 residues: DNA polymerase IV (355 aa).

Positions 6–187 (IIHVDMDAFY…LPVGKIHGVG (182 aa)) constitute a UmuC domain. Mg(2+)-binding residues include D10 and D105. E106 is a catalytic residue.

Belongs to the DNA polymerase type-Y family. As to quaternary structure, monomer. It depends on Mg(2+) as a cofactor.

Its subcellular location is the cytoplasm. The enzyme catalyses DNA(n) + a 2'-deoxyribonucleoside 5'-triphosphate = DNA(n+1) + diphosphate. In terms of biological role, poorly processive, error-prone DNA polymerase involved in untargeted mutagenesis. Copies undamaged DNA at stalled replication forks, which arise in vivo from mismatched or misaligned primer ends. These misaligned primers can be extended by PolIV. Exhibits no 3'-5' exonuclease (proofreading) activity. May be involved in translesional synthesis, in conjunction with the beta clamp from PolIII. This is DNA polymerase IV from Alkalilimnicola ehrlichii (strain ATCC BAA-1101 / DSM 17681 / MLHE-1).